We begin with the raw amino-acid sequence, 254 residues long: Chaperone protein PmfD (254 aa).

The first 26 residues, 1 to 26, serve as a signal peptide directing secretion; that stretch reads MNSFSTLKTLFCGSLLALSLVNTTQA.

Belongs to the periplasmic pilus chaperone family.

The protein resides in the periplasm. Involved in the biogenesis of the PMF fimbria. The sequence is that of Chaperone protein PmfD (pmfD) from Proteus mirabilis (strain HI4320).